The sequence spans 208 residues: Microtubule-associated protein Jupiter (208 aa).

2 disordered regions span residues 24–43 and 82–106; these read RPPG…QTPR and RGQK…PGKN. Residue Ser30 is modified to Phosphoserine. At Thr41 the chain carries Phosphothreonine. The span at 82 to 93 shows a compositional bias: basic and acidic residues; the sequence is RGQKTVDSHSRL. 2 positions are modified to phosphothreonine: Thr98 and Thr102. 3 positions are modified to phosphoserine: Ser111, Ser139, and Ser150. Residues 132 to 208 form a disordered region; that stretch reads HYNGKSGSVS…PPGGYSSGLW (77 aa). The span at 137–150 shows a compositional bias: low complexity; sequence SGSVSSASSSVSSS. 2 stretches are compositionally biased toward polar residues: residues 151 to 165 and 178 to 189; these read TENL…SEGN and EYSQRQESSNGG.

It belongs to the MAP Jupiter family. As to expression, ubiquitous expression throughout development. Expressed during cell division in the syncytial embryo. Expressed in developing photoreceptors of the eye imaginal disk of the third larval stage. In adults, highly expressed in neurons of the brain, concentrated in axons. In the adult ovaries, expression accumulates in the germarium and the polar follicular cells as well as in the oocyte along the microtubule network.

It is found in the nucleus. The protein resides in the cytoplasm. It localises to the cytoskeleton. Its subcellular location is the spindle. Functionally, binds to all microtubule populations. In Drosophila melanogaster (Fruit fly), this protein is Microtubule-associated protein Jupiter.